The sequence spans 317 residues: NADH kinase (317 aa).

Belongs to the NAD kinase family. Homodimer. Ubiquitous.

It is found in the cytoplasm. The enzyme catalyses NADH + ATP = ADP + NADPH + H(+). With respect to regulation, two-fold decrease in activity in the presence of PPi, iodoacetate or para-chloromercuribenzoate. Phosphorylates specifically NADH. Can phosphorylate NAD with a 100-fold decrease in efficiency compared to NADH. Prefers ATP as nucleoside triphosphate substrate. Can also utilize UTP, GTP and CTP. Key source of the cellular reductant NADPH which is an important antioxidant factor. In Arabidopsis thaliana (Mouse-ear cress), this protein is NADH kinase (NADK3).